The following is a 357-amino-acid chain: Probable cinnamyl alcohol dehydrogenase (357 aa).

Cysteine 47 is a Zn(2+) binding site. Serine 49 contacts NADP(+). Histidine 69, glutamate 70, cysteine 100, cysteine 103, cysteine 106, cysteine 114, and cysteine 163 together coordinate Zn(2+). Residues threonine 167, 188–193 (GLGGVG), 211–216 (SSSDKK), threonine 251, glycine 275, and 298–300 (SFI) each bind NADP(+).

The protein belongs to the zinc-containing alcohol dehydrogenase family. Homodimer. The cofactor is Zn(2+).

The enzyme catalyses (E)-cinnamyl alcohol + NADP(+) = (E)-cinnamaldehyde + NADPH + H(+). It catalyses the reaction (E)-coniferol + NADP(+) = (E)-coniferaldehyde + NADPH + H(+). It carries out the reaction (E)-sinapyl alcohol + NADP(+) = (E)-sinapaldehyde + NADPH + H(+). The catalysed reaction is (E)-4-coumaroyl alcohol + NADP(+) = (E)-4-coumaraldehyde + NADPH + H(+). The enzyme catalyses (E)-caffeyl alcohol + NADP(+) = (E)-caffeyl aldehyde + NADPH + H(+). It functions in the pathway aromatic compound metabolism; phenylpropanoid biosynthesis. Its function is as follows. Involved in lignin biosynthesis. Catalyzes the final step specific for the production of lignin monomers. Catalyzes the NADPH-dependent reduction of coniferaldehyde, 5-hydroxyconiferaldehyde, sinapaldehyde, 4-coumaraldehyde and caffeyl aldehyde to their respective alcohols. The chain is Probable cinnamyl alcohol dehydrogenase from Pinus taeda (Loblolly pine).